The chain runs to 379 residues: Homoserine O-acetyltransferase (379 aa).

The region spanning 54–332 (NAILVCHALS…PYQSEEIVKS (279 aa)) is the AB hydrolase-1 domain. The Nucleophile role is filled by serine 159. Arginine 228 is a binding site for substrate. Active-site residues include aspartate 318 and histidine 352. Aspartate 353 provides a ligand contact to substrate.

This sequence belongs to the AB hydrolase superfamily. MetX family. Homodimer.

The protein localises to the cytoplasm. It carries out the reaction L-homoserine + acetyl-CoA = O-acetyl-L-homoserine + CoA. It functions in the pathway amino-acid biosynthesis; L-methionine biosynthesis via de novo pathway; O-acetyl-L-homoserine from L-homoserine: step 1/1. Functionally, transfers an acetyl group from acetyl-CoA to L-homoserine, forming acetyl-L-homoserine. This is Homoserine O-acetyltransferase from Leptospira meyeri.